A 347-amino-acid polypeptide reads, in one-letter code: 4-hydroxy-2-oxovalerate aldolase (347 aa).

A Pyruvate carboxyltransferase domain is found at 2-252; that stretch reads ILISDATLRD…DTRTTFERVM (251 aa). 10–11 is a substrate binding site; the sequence is RD. D11 contributes to the Mn(2+) binding site. H14 (proton acceptor) is an active-site residue. Substrate is bound by residues S164 and H191. Residues H191 and H193 each contribute to the Mn(2+) site.

It belongs to the 4-hydroxy-2-oxovalerate aldolase family.

It carries out the reaction (S)-4-hydroxy-2-oxopentanoate = acetaldehyde + pyruvate. In Burkholderia pseudomallei (strain 1710b), this protein is 4-hydroxy-2-oxovalerate aldolase (mhpE).